The primary structure comprises 236 residues: 4-hydroxy-tetrahydrodipicolinate reductase (236 aa).

Residues 11–16 (GASGRM), 92–94 (GTT), and 116–119 (GSNF) contribute to the NAD(+) site. The Proton donor/acceptor role is filled by histidine 148. A (S)-2,3,4,5-tetrahydrodipicolinate-binding site is contributed by histidine 149. Residue lysine 152 is the Proton donor of the active site. A (S)-2,3,4,5-tetrahydrodipicolinate-binding site is contributed by 158 to 159 (GS).

It belongs to the DapB family.

The protein localises to the cytoplasm. The enzyme catalyses (S)-2,3,4,5-tetrahydrodipicolinate + NAD(+) + H2O = (2S,4S)-4-hydroxy-2,3,4,5-tetrahydrodipicolinate + NADH + H(+). It catalyses the reaction (S)-2,3,4,5-tetrahydrodipicolinate + NADP(+) + H2O = (2S,4S)-4-hydroxy-2,3,4,5-tetrahydrodipicolinate + NADPH + H(+). It participates in amino-acid biosynthesis; L-lysine biosynthesis via DAP pathway; (S)-tetrahydrodipicolinate from L-aspartate: step 4/4. Its function is as follows. Catalyzes the conversion of 4-hydroxy-tetrahydrodipicolinate (HTPA) to tetrahydrodipicolinate. The chain is 4-hydroxy-tetrahydrodipicolinate reductase from Xylella fastidiosa (strain M23).